We begin with the raw amino-acid sequence, 206 residues long: Small ribosomal subunit protein uS4 (206 aa).

Positions 28–52 (YLDRRPYAPGQHGQRRGRGRPSDYS) are disordered. The region spanning 96–171 (RRLDNVVFRM…QKRRRVSPWI (76 aa)) is the S4 RNA-binding domain.

Belongs to the universal ribosomal protein uS4 family. As to quaternary structure, part of the 30S ribosomal subunit. Contacts protein S5. The interaction surface between S4 and S5 is involved in control of translational fidelity.

Its function is as follows. One of the primary rRNA binding proteins, it binds directly to 16S rRNA where it nucleates assembly of the body of the 30S subunit. In terms of biological role, with S5 and S12 plays an important role in translational accuracy. The sequence is that of Small ribosomal subunit protein uS4 from Deinococcus geothermalis (strain DSM 11300 / CIP 105573 / AG-3a).